The sequence spans 266 residues: 5'-nucleotidase SurE (266 aa).

A divalent metal cation is bound by residues D8, D9, S39, and N93.

This sequence belongs to the SurE nucleotidase family. A divalent metal cation is required as a cofactor.

It is found in the cytoplasm. It catalyses the reaction a ribonucleoside 5'-phosphate + H2O = a ribonucleoside + phosphate. Functionally, nucleotidase that shows phosphatase activity on nucleoside 5'-monophosphates. The protein is 5'-nucleotidase SurE of Thermococcus gammatolerans (strain DSM 15229 / JCM 11827 / EJ3).